A 623-amino-acid polypeptide reads, in one-letter code: Alpha-1,2-mannosyltransferase Alg9 (623 aa).

A run of 8 helical transmembrane segments spans residues 152–172 (LIFY…ERYM), 193–223 (LFSV…AAWW), 229–254 (FAIF…PLVL), 266–284 (FVQW…MIAI), 326–348 (FLNF…IDYL), 360–378 (FPHY…VFFA), 390–410 (IYPL…RIFF), and 431–452 (FIAI…FALY).

This sequence belongs to the glycosyltransferase 22 family.

Its subcellular location is the endoplasmic reticulum membrane. The enzyme catalyses an alpha-D-Man-(1-&gt;2)-alpha-D-Man-(1-&gt;2)-alpha-D-Man-(1-&gt;3)-[alpha-D-Man-(1-&gt;3)-alpha-D-Man-(1-&gt;6)]-beta-D-Man-(1-&gt;4)-beta-D-GlcNAc-(1-&gt;4)-alpha-D-GlcNAc-diphospho-di-trans,poly-cis-dolichol + a di-trans,poly-cis-dolichyl beta-D-mannosyl phosphate = an alpha-D-Man-(1-&gt;2)-alpha-D-Man-(1-&gt;2)-alpha-D-Man-(1-&gt;3)-[alpha-D-Man-(1-&gt;2)-alpha-D-Man-(1-&gt;3)-alpha-D-Man-(1-&gt;6)]-beta-D-Man-(1-&gt;4)-beta-D-GlcNAc-(1-&gt;4)-alpha-D-GlcNAc-diphospho-di-trans,poly-cis-dolichol + a di-trans,poly-cis-dolichyl phosphate + H(+). The catalysed reaction is an alpha-D-Man-(1-&gt;2)-alpha-D-Man-(1-&gt;2)-alpha-D-Man-(1-&gt;3)-[alpha-D-Man-(1-&gt;2)-alpha-D-Man-(1-&gt;3)-[alpha-D-Man-(1-&gt;6)]-alpha-D-Man-(1-&gt;6)]-beta-D-Man-(1-&gt;4)-beta-D-GlcNAc-(1-&gt;4)-alpha-D-GlcNAc-diphospho-di-trans,poly-cis-dolichol + a di-trans,poly-cis-dolichyl beta-D-mannosyl phosphate = an alpha-D-Man-(1-&gt;2)-alpha-D-Man-(1-&gt;2)-alpha-D-Man-(1-&gt;3)-[alpha-D-Man-(1-&gt;2)-alpha-D-Man-(1-&gt;3)-[alpha-D-Man-(1-&gt;2)-alpha-D-Man-(1-&gt;6)]-alpha-D-Man-(1-&gt;6)]-beta-D-Man-(1-&gt;4)-beta-D-GlcNAc-(1-&gt;4)-alpha-D-GlcNAc-diphospho-di-trans,poly-cis-dolichol + a di-trans,poly-cis-dolichyl phosphate + H(+). It functions in the pathway protein modification; protein glycosylation. Its function is as follows. Probable alpha-1,2-mannosyltransferase involved in the N-glycosylation pathway. Probably involved in glycosylation of the TNF receptor grnd, regulating its ligand affinity. Required for normal epithelial growth and architecture. Suppressor of JNK-dependent intestinal stem cell proliferation. This Drosophila melanogaster (Fruit fly) protein is Alpha-1,2-mannosyltransferase Alg9.